A 122-amino-acid chain; its full sequence is Large ribosomal subunit protein uL14 (122 aa).

The protein belongs to the universal ribosomal protein uL14 family. As to quaternary structure, part of the 50S ribosomal subunit. Forms a cluster with proteins L3 and L19. In the 70S ribosome, L14 and L19 interact and together make contacts with the 16S rRNA in bridges B5 and B8.

Functionally, binds to 23S rRNA. Forms part of two intersubunit bridges in the 70S ribosome. The chain is Large ribosomal subunit protein uL14 from Pediococcus pentosaceus (strain ATCC 25745 / CCUG 21536 / LMG 10740 / 183-1w).